A 313-amino-acid polypeptide reads, in one-letter code: Biotin synthase (313 aa).

The Radical SAM core domain maps to 38-262 (REVQISTLLS…TMPHARVRLS (225 aa)). [4Fe-4S] cluster-binding residues include cysteine 53, cysteine 57, and cysteine 60. [2Fe-2S] cluster is bound by residues cysteine 97, cysteine 128, cysteine 188, and arginine 260.

It belongs to the radical SAM superfamily. Biotin synthase family. As to quaternary structure, homodimer. The cofactor is [4Fe-4S] cluster. It depends on [2Fe-2S] cluster as a cofactor.

The catalysed reaction is (4R,5S)-dethiobiotin + (sulfur carrier)-SH + 2 reduced [2Fe-2S]-[ferredoxin] + 2 S-adenosyl-L-methionine = (sulfur carrier)-H + biotin + 2 5'-deoxyadenosine + 2 L-methionine + 2 oxidized [2Fe-2S]-[ferredoxin]. It participates in cofactor biosynthesis; biotin biosynthesis; biotin from 7,8-diaminononanoate: step 2/2. Its function is as follows. Catalyzes the conversion of dethiobiotin (DTB) to biotin by the insertion of a sulfur atom into dethiobiotin via a radical-based mechanism. This Granulibacter bethesdensis (strain ATCC BAA-1260 / CGDNIH1) protein is Biotin synthase.